The chain runs to 644 residues: Probable potassium transport system protein Kup (644 aa).

Transmembrane regions (helical) follow at residues 10-30 (GGAT…GDIG), 56-76 (ILSL…AWVI), 106-126 (WWIL…GVIT), 143-163 (PAWK…LFMV), 175-195 (FGPS…TWIV), 212-232 (FFGI…LAVT), 252-272 (AWYF…GALL), 282-302 (PFFM…SGIA), 343-363 (IYLP…ILWF), 371-391 (FAYG…VFFV), 403-423 (AGLF…ANLL), and 425-445 (FVEG…TMST).

The protein belongs to the HAK/KUP transporter (TC 2.A.72) family.

It localises to the cell inner membrane. The enzyme catalyses K(+)(in) + H(+)(in) = K(+)(out) + H(+)(out). Functionally, transport of potassium into the cell. Likely operates as a K(+):H(+) symporter. This chain is Probable potassium transport system protein Kup, found in Acidithiobacillus ferrooxidans (strain ATCC 23270 / DSM 14882 / CIP 104768 / NCIMB 8455) (Ferrobacillus ferrooxidans (strain ATCC 23270)).